The chain runs to 692 residues: Elongation factor G 2 (692 aa).

In terms of domain architecture, tr-type G spans 8–283 (EKTRNIGIMA…SVVAYLPSPL (276 aa)). Residues 17–24 (AHIDAGKT), 81–85 (DTPGH), and 135–138 (NKMD) contribute to the GTP site.

This sequence belongs to the TRAFAC class translation factor GTPase superfamily. Classic translation factor GTPase family. EF-G/EF-2 subfamily.

It localises to the cytoplasm. Catalyzes the GTP-dependent ribosomal translocation step during translation elongation. During this step, the ribosome changes from the pre-translocational (PRE) to the post-translocational (POST) state as the newly formed A-site-bound peptidyl-tRNA and P-site-bound deacylated tRNA move to the P and E sites, respectively. Catalyzes the coordinated movement of the two tRNA molecules, the mRNA and conformational changes in the ribosome. The sequence is that of Elongation factor G 2 from Geobacter sulfurreducens (strain ATCC 51573 / DSM 12127 / PCA).